The primary structure comprises 372 residues: G patch domain and ankyrin repeat-containing protein 1 (372 aa).

The tract at residues 74-110 (DSSSSKPQRAEPMRERKKKRRRVTREPAAAGVPRQGR) is disordered. 2 ANK repeats span residues 124 to 155 (LAAQ…ARDA) and 156 to 186 (FWWT…WVGV). 2 disordered regions span residues 211-233 (RESH…SSQF) and 251-271 (AHLL…GVPT). Residues 220-233 (PENQNRSTPSSSQF) are compositionally biased toward polar residues. In terms of domain architecture, G-patch spans 271–317 (TSSPGFRLLLRGGWEPGMGLGPRGEGRANPIPTILKRDQEGLGYRSP). Residue Lys-306 forms a Glycyl lysine isopeptide (Lys-Gly) (interchain with G-Cter in SUMO2) linkage. 2 stretches are compositionally biased toward basic and acidic residues: residues 330-340 (TRAVSGRERVP) and 348-357 (RENRRQEEKG). Residues 330 to 357 (TRAVSGRERVPRVATLSQRENRRQEEKG) are disordered.

This chain is G patch domain and ankyrin repeat-containing protein 1 (Gpank1), found in Mus musculus (Mouse).